Here is a 451-residue protein sequence, read N- to C-terminus: Target of rapamycin complex 1 subunit tco89 (451 aa).

Residues 1–35 form a disordered region; sequence MERPSLSRRTSSSTVSTDGEGVYSRSTKERKRNFI. Positions 7–17 are enriched in low complexity; the sequence is SRRTSSSTVST. A Phosphoserine modification is found at Ser-70. 3 disordered regions span residues 122–164, 176–264, and 362–437; these read WDDA…PVTR, INSN…GNSL, and NQNF…DTDY. Positions 129-162 are enriched in polar residues; sequence NDSTAGNLDSDSALPTPSVTTNEAADSSRASSPV. Over residues 203 to 215 the composition is skewed to low complexity; that stretch reads DDSAADASTTKSS. 3 stretches are compositionally biased toward polar residues: residues 228-242, 362-376, and 407-417; these read HSNNREVTQATNQPK, NQNFDSQNAFNTSAA, and QSASLNASMSA. Over residues 419-430 the composition is skewed to basic residues; that stretch reads SHARQRSIHVPK.

Belongs to the TORC subunit TCO89 family. In terms of assembly, the target of rapamycin complex 1 (TORC1) is composed of at least mip1, pop3/wat1, tco89, toc1 and tor2. Post-translationally, either Thr-10, Ser-11, Ser-12, Ser-13 or Thr-14 and Ser-214 or Ser-215 and Ser-247 or Ser-249 are phosphorylated as well.

It is found in the cytoplasm. In terms of biological role, component of TORC1, which regulates multiple cellular processes to control cell growth in response to environmental signals. Tor2 is essential for growth. Nutrient limitation and environmental stress signals cause inactivation of TORC1. Active TORC1 positively controls cell growth and ribosome biogenesis by regulating ribosomal protein gene expression. TORC1 negatively controls G1 cell-cycle arrest, sexual development and amino acid uptake. Represses mating, meiosis and sporulation efficiency by interfering with the functions of the transcription factor ste11 and the meiosis-promoting RNA-binding protein mei2. This Schizosaccharomyces pombe (strain 972 / ATCC 24843) (Fission yeast) protein is Target of rapamycin complex 1 subunit tco89.